Here is a 284-residue protein sequence, read N- to C-terminus: Nucleotide-binding protein Sbal223_0704 (284 aa).

Residue 8–15 (GRSGSGKS) coordinates ATP. 56–59 (DVRN) provides a ligand contact to GTP.

This sequence belongs to the RapZ-like family.

In terms of biological role, displays ATPase and GTPase activities. The polypeptide is Nucleotide-binding protein Sbal223_0704 (Shewanella baltica (strain OS223)).